A 466-amino-acid chain; its full sequence is Uronate isomerase (466 aa).

Belongs to the metallo-dependent hydrolases superfamily. Uronate isomerase family.

The catalysed reaction is D-glucuronate = D-fructuronate. It catalyses the reaction aldehydo-D-galacturonate = keto-D-tagaturonate. It functions in the pathway carbohydrate metabolism; pentose and glucuronate interconversion. The polypeptide is Uronate isomerase (Streptococcus pneumoniae (strain 70585)).